Consider the following 92-residue polypeptide: Small ribosomal subunit protein uS19 (92 aa).

The protein belongs to the universal ribosomal protein uS19 family.

Functionally, protein S19 forms a complex with S13 that binds strongly to the 16S ribosomal RNA. The chain is Small ribosomal subunit protein uS19 from Malacoplasma penetrans (strain HF-2) (Mycoplasma penetrans).